We begin with the raw amino-acid sequence, 142 residues long: Transcriptional regulator MraZ (142 aa).

SpoVT-AbrB domains are found at residues 5 to 48 (EFEY…PLCE) and 77 to 120 (AFDV…DKET).

It belongs to the MraZ family. Forms oligomers.

It localises to the cytoplasm. The protein resides in the nucleoid. The polypeptide is Transcriptional regulator MraZ (Dehalococcoides mccartyi (strain ATCC BAA-2100 / JCM 16839 / KCTC 5957 / BAV1)).